A 154-amino-acid chain; its full sequence is MKETIISSMEKFIQKFFEELYLILFDYALKIAQNPIDELLIFGSIAIAYTVIYISGLFFARKINLPYIRKILEIGISVIFYFLVSLLEGKFPQVESLLLLKTLFLVQTIRVFILSLEAFQAFGFTTKLLINIFSILGGISFFIIKLSPFTRRKI.

The next 4 helical transmembrane spans lie at 39–61 (LLIF…FFAR), 65–87 (LPYI…VSLL), 94–113 (VESL…RVFI), and 128–150 (LLIN…SPFT).

Its subcellular location is the cell membrane. This is an uncharacterized protein from Aquifex aeolicus (strain VF5).